The primary structure comprises 380 residues: Glycine betaine/carnitine/choline transport ATP-binding protein OpuCA (380 aa).

One can recognise an ABC transporter domain in the interval 2 to 236 (LKLEQVSKVY…PANEFVEEFI (235 aa)). 35-42 (GPSGCGKT) contacts ATP. CBS domains lie at 255 to 314 (MNRT…VGDV) and 315 to 373 (YRSD…WGDE).

This sequence belongs to the ABC transporter superfamily. The complex is composed of two ATP-binding proteins (OpuCA), two transmembrane proteins (OpuCB and OpuCD) and a solute-binding protein (OpuCC).

With respect to regulation, binds cyclic di-AMP (c-di-AMP), which may regulate the transporter activity. Functionally, involved in a high affinity multicomponent binding-protein-dependent transport system for glycine betaine, carnitine and choline; probably responsible for energy coupling to the transport system. The protein is Glycine betaine/carnitine/choline transport ATP-binding protein OpuCA (opuCA) of Bacillus subtilis (strain 168).